The chain runs to 366 residues: MAAVNTVSSLPCSKAGAAVAGGAPRPSTCSVFYPPRCWSKRSSGNGVRAQASTTETTAAPAAEVTTKVEKVSKKQVDGVVTNKYRPKEPYTGRCLLNTRITGDDAPGETWHMVFSTDGEIPYREGQSIGVIPDGIDKNGKPHKLRLYSIASSAIGDFADSKTVSLCVKRLVYTNDKGEIVKGVCSNFLCDLKPGSDVKITGPVGKEMLMPKDPNATIIMLGTGTGIAPFRSFLWKMFFEEHDDYRFNGLAWLFLGVPTSSTLLYREEFERMKEIAPERFRLDFAVSREQTNAAGEKMYIQTRMAEYKDELWELLKKDNTYVYMCGLKGMEKGIDDIMIDLAAKDGIDWLDYKKQLKKSEQWNVEVY.

The transit peptide at Met1–Arg48 directs the protein to the chloroplast. The FAD-binding FR-type domain maps to Lys87 to Met209. FAD contacts are provided by residues Arg145–Ser148, Cys166–Lys168, Tyr172, and Val183–Ser185. Ser148 and Lys168 together coordinate NADP(+). An intrachain disulfide couples Cys184 to Cys189. Residue Ser185 is modified to Phosphoserine. The residue at position 216 (Thr216) is a Phosphothreonine. Thr224 contributes to the FAD binding site. Residues Thr224, Val256–Pro257, Ser286–Arg287, Lys296, Gly325–Leu326, and Glu364 contribute to the NADP(+) site.

It belongs to the ferredoxin--NADP reductase type 1 family. In terms of assembly, heterodimer with LFNR1. Component of high molecular weight thylakoid LFNRs-containing protein complexes containing LIR1, LFNR1, LFNR2, TIC62 and TROL proteins. Interacts directly with LFNR1 and LFNR2; LIR1 increases the affinity of LFNR1 and LFNR2 for TIC62 and subsequent thylakoid relocalization. FAD is required as a cofactor. May form interchain disulfide bonds with LIR1.

The protein resides in the plastid. It is found in the chloroplast stroma. The protein localises to the chloroplast thylakoid membrane. The enzyme catalyses 2 reduced [2Fe-2S]-[ferredoxin] + NADP(+) + H(+) = 2 oxidized [2Fe-2S]-[ferredoxin] + NADPH. It participates in energy metabolism; photosynthesis. Plays a key role in regulating the relative amounts of cyclic and non-cyclic electron flow to meet the demands of the plant for ATP and reducing power. This Oryza sativa subsp. indica (Rice) protein is Ferredoxin--NADP reductase, leaf isozyme 2, chloroplastic.